Consider the following 615-residue polypeptide: Cysteine-rich receptor-like protein kinase 1 (615 aa).

The first 28 residues, 1–28 (MQICASIAQFLAWVSFLVLLATVGSSSS), serve as a signal peptide directing secretion. Gnk2-homologous domains follow at residues 29 to 131 (SESL…DRDF) and 137 to 237 (DPTF…THKF). Topologically, residues 29-266 (SESLLNCQPL…SFFPHLSDRD (238 aa)) are extracellular. Asparagine 100 and asparagine 165 each carry an N-linked (GlcNAc...) asparagine glycan. A helical membrane pass occupies residues 267 to 287 (VTRLAIAAISLSILTSLGAFI). At 288–615 (SYRRVSRKRK…VLMPDEETRV (328 aa)) the chain is on the cytoplasmic side. The Protein kinase domain occupies 318 to 602 (FHDSMKLGQG…FEYPKQPPFL (285 aa)). ATP-binding positions include 324 to 332 (LGQGGAGSV) and lysine 346. Aspartate 443 functions as the Proton acceptor in the catalytic mechanism.

The protein belongs to the protein kinase superfamily. Ser/Thr protein kinase family. CRK subfamily. In terms of tissue distribution, expressed in the whole plant at low levels.

The protein localises to the membrane. The catalysed reaction is L-seryl-[protein] + ATP = O-phospho-L-seryl-[protein] + ADP + H(+). The enzyme catalyses L-threonyl-[protein] + ATP = O-phospho-L-threonyl-[protein] + ADP + H(+). The sequence is that of Cysteine-rich receptor-like protein kinase 1 from Arabidopsis thaliana (Mouse-ear cress).